The chain runs to 157 residues: 2-C-methyl-D-erythritol 2,4-cyclodiphosphate synthase (157 aa).

The a divalent metal cation site is built by Asp-9 and His-11. Residues 9–11 (DVH) and 35–36 (HS) each bind 4-CDP-2-C-methyl-D-erythritol 2-phosphate. An a divalent metal cation-binding site is contributed by His-43. 4-CDP-2-C-methyl-D-erythritol 2-phosphate-binding positions include 57–59 (DIG), 62–66 (FPDTD), 101–107 (AEKPKMA), 133–136 (TTTE), Phe-140, and Arg-143.

The protein belongs to the IspF family. Homotrimer. The cofactor is a divalent metal cation.

It catalyses the reaction 4-CDP-2-C-methyl-D-erythritol 2-phosphate = 2-C-methyl-D-erythritol 2,4-cyclic diphosphate + CMP. It functions in the pathway isoprenoid biosynthesis; isopentenyl diphosphate biosynthesis via DXP pathway; isopentenyl diphosphate from 1-deoxy-D-xylulose 5-phosphate: step 4/6. Functionally, involved in the biosynthesis of isopentenyl diphosphate (IPP) and dimethylallyl diphosphate (DMAPP), two major building blocks of isoprenoid compounds. Catalyzes the conversion of 4-diphosphocytidyl-2-C-methyl-D-erythritol 2-phosphate (CDP-ME2P) to 2-C-methyl-D-erythritol 2,4-cyclodiphosphate (ME-CPP) with a corresponding release of cytidine 5-monophosphate (CMP). This chain is 2-C-methyl-D-erythritol 2,4-cyclodiphosphate synthase, found in Listeria innocua serovar 6a (strain ATCC BAA-680 / CLIP 11262).